Here is a 261-residue protein sequence, read N- to C-terminus: Probable membrane transporter protein ORF9 (261 aa).

8 consecutive transmembrane segments (helical) span residues 8–28 (LLAF…IAGG), 29–49 (GGMI…QTLG), 78–98 (LPMA…ATIV), 100–120 (GDVL…YFGL), 133–151 (VTPF…FYDG), 152–171 (VFGP…LAGF), 189–209 (VGAF…GLLM), and 231–251 (IIKP…LADP).

Belongs to the 4-toluene sulfonate uptake permease (TSUP) (TC 2.A.102) family.

The protein resides in the cell membrane. In Sinorhizobium sp, this protein is Probable membrane transporter protein ORF9.